The primary structure comprises 261 residues: Potassium/proton antiporter CemA (261 aa).

The next 2 membrane-spanning stretches (helical) occupy residues 47 to 67 and 138 to 158; these read FLVF…GPWV and IISH…YFIM.

Belongs to the CemA family.

The protein resides in the plastid. The protein localises to the chloroplast inner membrane. The catalysed reaction is K(+)(in) + H(+)(out) = K(+)(out) + H(+)(in). Its function is as follows. Contributes to K(+)/H(+) antiport activity by supporting proton efflux to control proton extrusion and homeostasis in chloroplasts in a light-dependent manner to modulate photosynthesis. Prevents excessive induction of non-photochemical quenching (NPQ) under continuous-light conditions. Indirectly promotes efficient inorganic carbon uptake into chloroplasts. The polypeptide is Potassium/proton antiporter CemA (Ginkgo biloba (Ginkgo)).